Consider the following 272-residue polypeptide: HMP-PP phosphatase (272 aa).

Asp8 functions as the Nucleophile in the catalytic mechanism. The Mg(2+) site is built by Asp8, Asp10, and Asp212.

It belongs to the HAD-like hydrolase superfamily. Cof family. Mg(2+) is required as a cofactor.

The enzyme catalyses 4-amino-2-methyl-5-(diphosphooxymethyl)pyrimidine + H2O = 4-amino-2-methyl-5-(phosphooxymethyl)pyrimidine + phosphate + H(+). In terms of biological role, catalyzes the hydrolysis of 4-amino-2-methyl-5-hydroxymethylpyrimidine pyrophosphate (HMP-PP) to 4-amino-2-methyl-5-hydroxymethylpyrimidine phosphate (HMP-P). The protein is HMP-PP phosphatase of Escherichia coli (strain 55989 / EAEC).